We begin with the raw amino-acid sequence, 61 residues long: Large ribosomal subunit protein uL30 (61 aa).

Belongs to the universal ribosomal protein uL30 family. Part of the 50S ribosomal subunit.

The protein is Large ribosomal subunit protein uL30 of Caulobacter vibrioides (strain ATCC 19089 / CIP 103742 / CB 15) (Caulobacter crescentus).